Here is a 513-residue protein sequence, read N- to C-terminus: ATP synthase subunit alpha (513 aa).

G169 to T176 is a binding site for ATP.

Belongs to the ATPase alpha/beta chains family. F-type ATPases have 2 components, CF(1) - the catalytic core - and CF(0) - the membrane proton channel. CF(1) has five subunits: alpha(3), beta(3), gamma(1), delta(1), epsilon(1). CF(0) has three main subunits: a(1), b(2) and c(9-12). The alpha and beta chains form an alternating ring which encloses part of the gamma chain. CF(1) is attached to CF(0) by a central stalk formed by the gamma and epsilon chains, while a peripheral stalk is formed by the delta and b chains.

It localises to the cell inner membrane. The enzyme catalyses ATP + H2O + 4 H(+)(in) = ADP + phosphate + 5 H(+)(out). Its function is as follows. Produces ATP from ADP in the presence of a proton gradient across the membrane. The alpha chain is a regulatory subunit. In Shewanella denitrificans (strain OS217 / ATCC BAA-1090 / DSM 15013), this protein is ATP synthase subunit alpha.